Consider the following 152-residue polypeptide: MKTPIELKILDSRIGTEFPLPAYATPGSAGMDLRAITDTQLVIQPGETVLIPTGIAIHVADPSLAAIILPRSGLGHKHGIVLGNLVGLIDSDYQGPLMVSCWNRGSEPFTIEIGDRLAQLVFVPVVQAEFKLVDEFNQSDRGTGGFGHSGTK.

Substrate is bound by residues 71–73, Asn-84, 88–90, and Met-98; these read RSG and LID.

The protein belongs to the dUTPase family. It depends on Mg(2+) as a cofactor.

It catalyses the reaction dUTP + H2O = dUMP + diphosphate + H(+). Its pathway is pyrimidine metabolism; dUMP biosynthesis; dUMP from dCTP (dUTP route): step 2/2. Its function is as follows. This enzyme is involved in nucleotide metabolism: it produces dUMP, the immediate precursor of thymidine nucleotides and it decreases the intracellular concentration of dUTP so that uracil cannot be incorporated into DNA. The protein is Deoxyuridine 5'-triphosphate nucleotidohydrolase of Shewanella halifaxensis (strain HAW-EB4).